Consider the following 1010-residue polypeptide: 2-oxoglutarate dehydrogenase-like, mitochondrial (1010 aa).

A mitochondrion-targeting transit peptide spans 1–107 (MSQLRLLLFR…RASVSSCTKT (107 aa)). The tract at residues 28–47 (GGRRRSSGPPTTIPRSRGGV) is disordered. Ca(2+) contacts are provided by His130, Asp143, and Asp145. The thiamine diphosphate site is built by Arg299, Asp398, Asn431, Ile433, and Gln663. Mg(2+) is bound by residues Asp398, Asn431, and Ile433.

It belongs to the alpha-ketoglutarate dehydrogenase family. The OGDHC complex comprises multiple copies of three catalytic enzyme components, the 2-oxoglutarate dehydrogenase (OGDH/E1), the dihydrolipoamide dehydrogenase (DLST/E2) and the dihydrolipoamide dehydrogenase (DLD/E3). OGDHL/E1-like isoenzyme may replace OGDH in the OGDHC complex in the brain. The presence of either ODGH/E1 or ODGHL/E1-like isoenzyme in the complex may depend on its tissular distribution. Thiamine diphosphate is required as a cofactor. The cofactor is Mg(2+). The OGDHL-containing OGDHC complex is present in the brain, but not in the heart.

The protein resides in the mitochondrion matrix. The enzyme catalyses N(6)-[(R)-lipoyl]-L-lysyl-[protein] + 2-oxoglutarate + H(+) = N(6)-[(R)-S(8)-succinyldihydrolipoyl]-L-lysyl-[protein] + CO2. Its function is as follows. 2-oxoglutarate dehydrogenase (E1-like) component of the 2-oxoglutarate dehydrogenase multienzyme complex (OGDHC) which mediates the decarboxylation of alpha-ketoglutarate in the tricarboxylic acid cycle. The OGDHC complex catalyzes the overall conversion of 2-oxoglutarate to succinyl-CoA and CO(2) while reducing NAD(+) to NADH. The OGDHC complex is mainly active in the mitochondrion. Involved in the inhibition of cell proliferation and in apoptosis. In Rattus norvegicus (Rat), this protein is 2-oxoglutarate dehydrogenase-like, mitochondrial.